Here is a 354-residue protein sequence, read N- to C-terminus: Homeobox protein Nkx-2.4 (354 aa).

Positions 188–247 (RRKRRVLFSQAQVYELERRFKQQKYLSAPEREHLASMIHLTPTQVKIWFQNHRYKMKRQA) form a DNA-binding region, homeobox. The disordered stretch occupies residues 245 to 329 (RQAKDKAAQQ…PALHGPGGGL (85 aa)). The segment covering 262 to 272 (GPPPPPPPPSP) has biased composition (pro residues). Over residues 290–304 (GAGTPTPGQGGQQPQ) the composition is skewed to low complexity.

This sequence belongs to the NK-2 homeobox family. As to expression, in the embryo it is detected in the posterior hypothalamus and later in the head. In the adult it is detected only in testis.

It is found in the nucleus. Its function is as follows. Probable transcription factor. The polypeptide is Homeobox protein Nkx-2.4 (Nkx2-4) (Mus musculus (Mouse)).